Consider the following 322-residue polypeptide: Acetyl-coenzyme A carboxylase carboxyl transferase subunit alpha (322 aa).

The CoA carboxyltransferase C-terminal domain occupies 30–293; that stretch reads ALDISAEIAR…KQTLQESLRK (264 aa).

It belongs to the AccA family. In terms of assembly, acetyl-CoA carboxylase is a heterohexamer composed of biotin carboxyl carrier protein (AccB), biotin carboxylase (AccC) and two subunits each of ACCase subunit alpha (AccA) and ACCase subunit beta (AccD).

Its subcellular location is the cytoplasm. It carries out the reaction N(6)-carboxybiotinyl-L-lysyl-[protein] + acetyl-CoA = N(6)-biotinyl-L-lysyl-[protein] + malonyl-CoA. It functions in the pathway lipid metabolism; malonyl-CoA biosynthesis; malonyl-CoA from acetyl-CoA: step 1/1. In terms of biological role, component of the acetyl coenzyme A carboxylase (ACC) complex. First, biotin carboxylase catalyzes the carboxylation of biotin on its carrier protein (BCCP) and then the CO(2) group is transferred by the carboxyltransferase to acetyl-CoA to form malonyl-CoA. The polypeptide is Acetyl-coenzyme A carboxylase carboxyl transferase subunit alpha (Nitrosomonas europaea (strain ATCC 19718 / CIP 103999 / KCTC 2705 / NBRC 14298)).